The chain runs to 178 residues: Large ribosomal subunit protein uL13m (178 aa).

Residue S2 is modified to N-acetylserine.

The protein belongs to the universal ribosomal protein uL13 family. As to quaternary structure, component of the mitochondrial large ribosomal subunit (mt-LSU). Mature mammalian 55S mitochondrial ribosomes consist of a small (28S) and a large (39S) subunit. The 28S small subunit contains a 12S ribosomal RNA (12S mt-rRNA) and 30 different proteins. The 39S large subunit contains a 16S rRNA (16S mt-rRNA), a copy of mitochondrial valine transfer RNA (mt-tRNA(Val)), which plays an integral structural role, and 52 different proteins. Interacts with OXA1L.

It localises to the mitochondrion. This Homo sapiens (Human) protein is Large ribosomal subunit protein uL13m (MRPL13).